The following is a 494-amino-acid chain: uncharacterized protein (494 aa).

Residues 4–82 (FTITVKKTEG…NMIIEPLEGF (79 aa)) form the 2Fe-2S ferredoxin-type domain. The [2Fe-2S] cluster site is built by cysteine 46, cysteine 51, cysteine 54, and cysteine 66. 2 consecutive 4Fe-4S ferredoxin-type domains span residues 127–157 (DLKDVKKIRGCIDCLSCIAMCPARKYSNYPG) and 178–208 (EKEAFDENIYNCTTCGRCVEVCPKEIDIVHN). Cysteine 137, cysteine 140, cysteine 143, cysteine 147, cysteine 189, cysteine 192, cysteine 195, and cysteine 199 together coordinate [4Fe-4S] cluster.

This sequence belongs to the succinate dehydrogenase/fumarate reductase iron-sulfur protein family.

This is an uncharacterized protein from Methanococcus maripaludis (strain DSM 14266 / JCM 13030 / NBRC 101832 / S2 / LL).